Reading from the N-terminus, the 582-residue chain is tRNA(Ile)-lysidine synthase (582 aa).

46–51 (SGGADS) is a binding site for ATP. One can recognise a CMP/dCMP-type deaminase domain in the interval 402 to 525 (DPLHAAMGEA…DLLADHWGWR (124 aa)). The interval 548-582 (VRRRSADTPQTPNAETPAPRSSRSTSASGKPTMLE) is disordered. Residues 563 to 575 (TPAPRSSRSTSAS) show a composition bias toward low complexity.

The protein belongs to the tRNA(Ile)-lysidine synthase family.

The protein localises to the cytoplasm. It catalyses the reaction cytidine(34) in tRNA(Ile2) + L-lysine + ATP = lysidine(34) in tRNA(Ile2) + AMP + diphosphate + H(+). Ligates lysine onto the cytidine present at position 34 of the AUA codon-specific tRNA(Ile) that contains the anticodon CAU, in an ATP-dependent manner. Cytidine is converted to lysidine, thus changing the amino acid specificity of the tRNA from methionine to isoleucine. The polypeptide is tRNA(Ile)-lysidine synthase (Deinococcus radiodurans (strain ATCC 13939 / DSM 20539 / JCM 16871 / CCUG 27074 / LMG 4051 / NBRC 15346 / NCIMB 9279 / VKM B-1422 / R1)).